Reading from the N-terminus, the 464-residue chain is Soluble pyridine nucleotide transhydrogenase (464 aa).

FAD is bound at residue 35–44 (DDRPQVGGNC).

This sequence belongs to the class-I pyridine nucleotide-disulfide oxidoreductase family. FAD serves as cofactor.

The protein localises to the cytoplasm. The enzyme catalyses NAD(+) + NADPH = NADH + NADP(+). Its function is as follows. Conversion of NADPH, generated by peripheral catabolic pathways, to NADH, which can enter the respiratory chain for energy generation. The chain is Soluble pyridine nucleotide transhydrogenase from Azotobacter vinelandii (strain DJ / ATCC BAA-1303).